We begin with the raw amino-acid sequence, 399 residues long: Acetate kinase (399 aa).

Residue Asn10 coordinates Mg(2+). Position 17 (Lys17) interacts with ATP. Arg91 serves as a coordination point for substrate. Asp148 acts as the Proton donor/acceptor in catalysis. ATP-binding positions include 208–212, 283–285, and 331–335; these read HLGNG, DCR, and GIGEN. Residue Glu385 coordinates Mg(2+).

The protein belongs to the acetokinase family. In terms of assembly, homodimer. It depends on Mg(2+) as a cofactor. Requires Mn(2+) as cofactor.

Its subcellular location is the cytoplasm. The catalysed reaction is acetate + ATP = acetyl phosphate + ADP. It participates in metabolic intermediate biosynthesis; acetyl-CoA biosynthesis; acetyl-CoA from acetate: step 1/2. Functionally, catalyzes the formation of acetyl phosphate from acetate and ATP. Can also catalyze the reverse reaction. The polypeptide is Acetate kinase (Shewanella oneidensis (strain ATCC 700550 / JCM 31522 / CIP 106686 / LMG 19005 / NCIMB 14063 / MR-1)).